A 1105-amino-acid polypeptide reads, in one-letter code: Tubulin-folding cofactor D (1105 aa).

N-linked (GlcNAc...) asparagine glycosylation is found at Asn122 and Asn126. HEAT repeat units follow at residues Ile308 to Trp345, Leu347 to Ala385, Ser401 to Lys446, and Leu452 to Ser489. Asn373 is a glycosylation site (N-linked (GlcNAc...) asparagine). 3 N-linked (GlcNAc...) asparagine glycosylation sites follow: Asn721, Asn883, and Asn1083.

Interacts with alp21.

Its subcellular location is the cytoplasm. The protein resides in the cytoskeleton. Its function is as follows. Has a function in the folding of beta-tubulin. Microtubule-associated protein that is essential to direct polarized cell growth and to position the nucleus and septum to the center of the cell during mitosis. The chain is Tubulin-folding cofactor D (alp1) from Schizosaccharomyces pombe (strain 972 / ATCC 24843) (Fission yeast).